Consider the following 890-residue polypeptide: Translation initiation factor IF-2 (890 aa).

Residues leucine 45–glutamine 304 are disordered. Residues serine 67–valine 81 are compositionally biased toward polar residues. Residues valine 92–aspartate 217 are compositionally biased toward basic and acidic residues. Over residues glycine 252–asparagine 266 the composition is skewed to basic residues. Over residues lysine 267 to alanine 280 the composition is skewed to basic and acidic residues. One can recognise a tr-type G domain in the interval proline 389 to lysine 558. The interval glycine 398–threonine 405 is G1. Residue glycine 398 to threonine 405 coordinates GTP. A G2 region spans residues glycine 423–histidine 427. The segment at aspartate 444–glycine 447 is G3. Residues aspartate 444–histidine 448 and asparagine 498–aspartate 501 contribute to the GTP site. Residues asparagine 498 to aspartate 501 are G4. The tract at residues serine 534 to lysine 536 is G5. The residue at position 808 (lysine 808) is an N6-acetyllysine.

This sequence belongs to the TRAFAC class translation factor GTPase superfamily. Classic translation factor GTPase family. IF-2 subfamily.

The protein localises to the cytoplasm. One of the essential components for the initiation of protein synthesis. Protects formylmethionyl-tRNA from spontaneous hydrolysis and promotes its binding to the 30S ribosomal subunits. Also involved in the hydrolysis of GTP during the formation of the 70S ribosomal complex. The protein is Translation initiation factor IF-2 of Escherichia coli (strain SMS-3-5 / SECEC).